A 454-amino-acid chain; its full sequence is Bifunctional protein GlmU (454 aa).

Positions 1 to 228 (MTLPLHVVIL…PQDVEGANDP (228 aa)) are pyrophosphorylase. Residues 10-13 (LAAG), K24, Q76, 81-82 (GT), 103-105 (YGD), G138, E153, N168, and N226 contribute to the UDP-N-acetyl-alpha-D-glucosamine site. D105 serves as a coordination point for Mg(2+). Residue N226 participates in Mg(2+) binding. A linker region spans residues 229-249 (WQLAQLERAWQLRAARALCLQ). The N-acetyltransferase stretch occupies residues 250-454 (GVRMADPARV…IEGWERPKKK (205 aa)). R332 and K350 together coordinate UDP-N-acetyl-alpha-D-glucosamine. The Proton acceptor role is filled by H362. Positions 365 and 376 each coordinate UDP-N-acetyl-alpha-D-glucosamine. Acetyl-CoA contacts are provided by residues A379, 385–386 (NY), S404, A422, and R439.

It in the N-terminal section; belongs to the N-acetylglucosamine-1-phosphate uridyltransferase family. The protein in the C-terminal section; belongs to the transferase hexapeptide repeat family. Homotrimer. Mg(2+) is required as a cofactor.

It localises to the cytoplasm. It carries out the reaction alpha-D-glucosamine 1-phosphate + acetyl-CoA = N-acetyl-alpha-D-glucosamine 1-phosphate + CoA + H(+). The catalysed reaction is N-acetyl-alpha-D-glucosamine 1-phosphate + UTP + H(+) = UDP-N-acetyl-alpha-D-glucosamine + diphosphate. Its pathway is nucleotide-sugar biosynthesis; UDP-N-acetyl-alpha-D-glucosamine biosynthesis; N-acetyl-alpha-D-glucosamine 1-phosphate from alpha-D-glucosamine 6-phosphate (route II): step 2/2. It participates in nucleotide-sugar biosynthesis; UDP-N-acetyl-alpha-D-glucosamine biosynthesis; UDP-N-acetyl-alpha-D-glucosamine from N-acetyl-alpha-D-glucosamine 1-phosphate: step 1/1. The protein operates within bacterial outer membrane biogenesis; LPS lipid A biosynthesis. In terms of biological role, catalyzes the last two sequential reactions in the de novo biosynthetic pathway for UDP-N-acetylglucosamine (UDP-GlcNAc). The C-terminal domain catalyzes the transfer of acetyl group from acetyl coenzyme A to glucosamine-1-phosphate (GlcN-1-P) to produce N-acetylglucosamine-1-phosphate (GlcNAc-1-P), which is converted into UDP-GlcNAc by the transfer of uridine 5-monophosphate (from uridine 5-triphosphate), a reaction catalyzed by the N-terminal domain. The polypeptide is Bifunctional protein GlmU (Xanthomonas campestris pv. campestris (strain B100)).